We begin with the raw amino-acid sequence, 370 residues long: 3,5-dihydroxyphenylacetyl-CoA synthase (370 aa).

Residue C158 is part of the active site.

It belongs to the thiolase-like superfamily. Chalcone/stilbene synthases family.

It carries out the reaction 4 malonyl-CoA + 4 H(+) = (3,5-dihydroxyphenyl)acetyl-CoA + 4 CO2 + 3 CoA + H2O. It functions in the pathway antibiotic biosynthesis; vancomycin biosynthesis. Involved in the biosynthesis of the nonproteinogenic amino acid monomer (S)-3,5-dihydroxyphenylglycine (Dpg) responsible of the production of vancomycin and teicoplanin antibiotics. Catalyzes the Claisen condensation of four molecules of malonyl-CoA to yield 3,5-dihydroxyphenylacetyl-CoA (DPA-CoA) and three free coenzyme A (CoA). DpgA requires the presence of the dehydratases DpgB and DpgD to facilitate the aromatization of the DPA-S-DgpA or DPA-S-CoA intermediate. This Amycolatopsis orientalis (Nocardia orientalis) protein is 3,5-dihydroxyphenylacetyl-CoA synthase (dpgA).